The following is a 34-amino-acid chain: Corticostatin-6 (34 aa).

Intrachain disulfides connect C3–C31, C5–C20, and C10–C30.

This sequence belongs to the alpha-defensin family. Lung, spleen, small intestine, pituitary gland, adrenal medulla and plasma.

It localises to the secreted. Functionally, microbicidal activity and inhibits corticotropin (ACTH) stimulated corticosterone production. The protein is Corticostatin-6 of Oryctolagus cuniculus (Rabbit).